The chain runs to 224 residues: UPF0758 protein HEAR2468 (224 aa).

Residues 102-224 form the MPN domain; sequence ALNSPQAVKQ…VYSFAEQGQL (123 aa). Zn(2+) is bound by residues H173, H175, and D186. Positions 173-186 match the JAMM motif motif; the sequence is HNHPSGTPEPSAAD.

The protein belongs to the UPF0758 family.

This is UPF0758 protein HEAR2468 from Herminiimonas arsenicoxydans.